We begin with the raw amino-acid sequence, 210 residues long: Isochorismatase domain-containing protein 2B (210 aa).

Lysine 178 is modified (N6-succinyllysine).

Belongs to the isochorismatase family. Interacts with CDKN2A. In terms of tissue distribution, ubiquitous. Expressed predominantly in uterus, stomach and urinary tract.

The protein localises to the cytoplasm. Its subcellular location is the nucleus. The polypeptide is Isochorismatase domain-containing protein 2B (Isoc2b) (Mus musculus (Mouse)).